A 386-amino-acid polypeptide reads, in one-letter code: Histone-lysine N-methyltransferase SETD7 (386 aa).

Residues 1 to 12 (MDSSDDEIACDE) show a composition bias toward acidic residues. The tract at residues 1-21 (MDSSDDEIACDEGDYKGAKDD) is disordered. MORN repeat units lie at residues 15 to 38 (YKGA…SGDE), 39 to 61 (FIGA…DDST), 62 to 84 (LEGN…DGSI), and 109 to 131 (FRGQ…DGGS). One can recognise an SET domain in the interval 222–344 (ELVYAAPSKI…EGDELTVHYT (123 aa)). Residues 234 to 236 (AGE), Asn-304, and His-305 each bind S-adenosyl-L-methionine.

Belongs to the class V-like SAM-binding methyltransferase superfamily. Histone-lysine methyltransferase family. SET7 subfamily.

The protein localises to the nucleus. It is found in the chromosome. It catalyses the reaction L-lysyl(4)-[histone H3] + S-adenosyl-L-methionine = N(6)-methyl-L-lysyl(4)-[histone H3] + S-adenosyl-L-homocysteine + H(+). It carries out the reaction L-lysyl-[protein] + S-adenosyl-L-methionine = N(6)-methyl-L-lysyl-[protein] + S-adenosyl-L-homocysteine + H(+). In terms of biological role, histone methyltransferase that specifically monomethylates 'Lys-4' of histone H3. H3 'Lys-4' methylation represents a specific tag for epigenetic transcriptional activation. Plays a central role in the transcriptional activation of genes. Also has methyltransferase activity toward non-histone proteins. The protein is Histone-lysine N-methyltransferase SETD7 (setd7) of Halocynthia roretzi (Sea squirt).